The sequence spans 143 residues: Meiotically up-regulated gene 128 protein (143 aa).

In terms of biological role, has a role in meiosis. This is Meiotically up-regulated gene 128 protein (mug128) from Schizosaccharomyces pombe (strain 972 / ATCC 24843) (Fission yeast).